Here is a 330-residue protein sequence, read N- to C-terminus: Holliday junction branch migration complex subunit RuvB (330 aa).

Positions 1–181 are large ATPase domain (RuvB-L); that stretch reads MEDRLVGCRL…FGVINKLELY (181 aa). ATP-binding positions include L20, R21, G62, K65, T66, T67, 128-130, R171, Y181, and R218; that span reads EDY. T66 is a Mg(2+) binding site. The interval 182–252 is small ATPAse domain (RuvB-S); that stretch reads SVEELGQIVK…IARTGLEALE (71 aa). The tract at residues 255–330 is head domain (RuvB-H); that stretch reads EIGLDAVDRN…AYEHFGLKYE (76 aa). Residues K310 and R315 each contribute to the DNA site.

Belongs to the RuvB family. As to quaternary structure, homohexamer. Forms an RuvA(8)-RuvB(12)-Holliday junction (HJ) complex. HJ DNA is sandwiched between 2 RuvA tetramers; dsDNA enters through RuvA and exits via RuvB. An RuvB hexamer assembles on each DNA strand where it exits the tetramer. Each RuvB hexamer is contacted by two RuvA subunits (via domain III) on 2 adjacent RuvB subunits; this complex drives branch migration. In the full resolvosome a probable DNA-RuvA(4)-RuvB(12)-RuvC(2) complex forms which resolves the HJ.

Its subcellular location is the cytoplasm. It catalyses the reaction ATP + H2O = ADP + phosphate + H(+). Its function is as follows. The RuvA-RuvB-RuvC complex processes Holliday junction (HJ) DNA during genetic recombination and DNA repair, while the RuvA-RuvB complex plays an important role in the rescue of blocked DNA replication forks via replication fork reversal (RFR). RuvA specifically binds to HJ cruciform DNA, conferring on it an open structure. The RuvB hexamer acts as an ATP-dependent pump, pulling dsDNA into and through the RuvAB complex. RuvB forms 2 homohexamers on either side of HJ DNA bound by 1 or 2 RuvA tetramers; 4 subunits per hexamer contact DNA at a time. Coordinated motions by a converter formed by DNA-disengaged RuvB subunits stimulates ATP hydrolysis and nucleotide exchange. Immobilization of the converter enables RuvB to convert the ATP-contained energy into a lever motion, pulling 2 nucleotides of DNA out of the RuvA tetramer per ATP hydrolyzed, thus driving DNA branch migration. The RuvB motors rotate together with the DNA substrate, which together with the progressing nucleotide cycle form the mechanistic basis for DNA recombination by continuous HJ branch migration. Branch migration allows RuvC to scan DNA until it finds its consensus sequence, where it cleaves and resolves cruciform DNA. The polypeptide is Holliday junction branch migration complex subunit RuvB (Acetivibrio thermocellus (strain ATCC 27405 / DSM 1237 / JCM 9322 / NBRC 103400 / NCIMB 10682 / NRRL B-4536 / VPI 7372) (Clostridium thermocellum)).